Here is a 130-residue protein sequence, read N- to C-terminus: Small ribosomal subunit protein uS8 (130 aa).

This sequence belongs to the universal ribosomal protein uS8 family. In terms of assembly, part of the 30S ribosomal subunit. Contacts proteins S5 and S12.

Functionally, one of the primary rRNA binding proteins, it binds directly to 16S rRNA central domain where it helps coordinate assembly of the platform of the 30S subunit. The chain is Small ribosomal subunit protein uS8 from Acidiphilium cryptum (strain JF-5).